The following is a 387-amino-acid chain: 8-amino-7-oxononanoate synthase (387 aa).

R19 is a substrate binding site. 106-107 contributes to the pyridoxal 5'-phosphate binding site; the sequence is GY. Residue H131 participates in substrate binding. Pyridoxal 5'-phosphate is bound by residues S177, H205, and T236. At K239 the chain carries N6-(pyridoxal phosphate)lysine. T353 contacts substrate.

The protein belongs to the class-II pyridoxal-phosphate-dependent aminotransferase family. BioF subfamily. In terms of assembly, homodimer. Requires pyridoxal 5'-phosphate as cofactor.

It catalyses the reaction 6-carboxyhexanoyl-[ACP] + L-alanine + H(+) = (8S)-8-amino-7-oxononanoate + holo-[ACP] + CO2. It functions in the pathway cofactor biosynthesis; biotin biosynthesis. In terms of biological role, catalyzes the decarboxylative condensation of pimeloyl-[acyl-carrier protein] and L-alanine to produce 8-amino-7-oxononanoate (AON), [acyl-carrier protein], and carbon dioxide. The polypeptide is 8-amino-7-oxononanoate synthase (Nitrosomonas europaea (strain ATCC 19718 / CIP 103999 / KCTC 2705 / NBRC 14298)).